A 499-amino-acid polypeptide reads, in one-letter code: Proline--tRNA ligase (499 aa).

Residues 1–17 are compositionally biased toward basic and acidic residues; it reads MTKDGGKKDNQGQDKKA. The tract at residues 1–21 is disordered; the sequence is MTKDGGKKDNQGQDKKAQQYG.

Belongs to the class-II aminoacyl-tRNA synthetase family. ProS type 3 subfamily. In terms of assembly, homodimer.

It is found in the cytoplasm. It carries out the reaction tRNA(Pro) + L-proline + ATP = L-prolyl-tRNA(Pro) + AMP + diphosphate. In terms of biological role, catalyzes the attachment of proline to tRNA(Pro) in a two-step reaction: proline is first activated by ATP to form Pro-AMP and then transferred to the acceptor end of tRNA(Pro). Can inadvertently accommodate and process cysteine. The sequence is that of Proline--tRNA ligase (proS) from Deinococcus radiodurans (strain ATCC 13939 / DSM 20539 / JCM 16871 / CCUG 27074 / LMG 4051 / NBRC 15346 / NCIMB 9279 / VKM B-1422 / R1).